Here is a 176-residue protein sequence, read N- to C-terminus: Transcription factor E (176 aa).

Residues 5–89 (IDQLMKDMAR…YWKANVDQIN (85 aa)) enclose the HTH TFE/IIEalpha-type domain.

This sequence belongs to the TFE family. In terms of assembly, monomer. Interaction with RNA polymerase subunits RpoF and RpoE is necessary for Tfe stimulatory transcription activity. Able to interact with Tbp and RNA polymerase in the absence of DNA promoter. Interacts both with the preinitiation and elongation complexes.

Its function is as follows. Transcription factor that plays a role in the activation of archaeal genes transcribed by RNA polymerase. Facilitates transcription initiation by enhancing TATA-box recognition by TATA-box-binding protein (Tbp), and transcription factor B (Tfb) and RNA polymerase recruitment. Not absolutely required for transcription in vitro, but particularly important in cases where Tbp or Tfb function is not optimal. It dynamically alters the nucleic acid-binding properties of RNA polymerases by stabilizing the initiation complex and destabilizing elongation complexes. Seems to translocate with the RNA polymerase following initiation and acts by binding to the non template strand of the transcription bubble in elongation complexes. The sequence is that of Transcription factor E from Metallosphaera sedula (strain ATCC 51363 / DSM 5348 / JCM 9185 / NBRC 15509 / TH2).